The chain runs to 237 residues: Sugar fermentation stimulation protein homolog (237 aa).

It belongs to the SfsA family.

The protein is Sugar fermentation stimulation protein homolog of Synechocystis sp. (strain ATCC 27184 / PCC 6803 / Kazusa).